A 285-amino-acid polypeptide reads, in one-letter code: Putative quercetin 2,3-dioxygenase PA3240 (285 aa).

A divalent metal cation contacts are provided by His60, His62, His104, and Glu106.

It belongs to the pirin family. It depends on a divalent metal cation as a cofactor.

It carries out the reaction quercetin + O2 = 2-(3,4-dihydroxybenzoyloxy)-4,6-dihydroxybenzoate + CO. It participates in flavonoid metabolism; quercetin degradation. In terms of biological role, putative quercetin 2,3-dioxygenase. The sequence is that of Putative quercetin 2,3-dioxygenase PA3240 from Pseudomonas aeruginosa (strain ATCC 15692 / DSM 22644 / CIP 104116 / JCM 14847 / LMG 12228 / 1C / PRS 101 / PAO1).